A 488-amino-acid polypeptide reads, in one-letter code: 7,8-epoxymelianol synthase CYP88A51 (488 aa).

Residues 4–24 traverse the membrane as a helical segment; that stretch reads NFLWPMLAMFLGSLVVMFGFL. Heme is bound at residue Cys-436.

This sequence belongs to the cytochrome P450 family. Heme is required as a cofactor. Accumulates in mature fruits and in juice vesicles.

Its subcellular location is the membrane. It carries out the reaction melianol + reduced [NADPH--hemoprotein reductase] + O2 = 7,8-epoxymelianol + oxidized [NADPH--hemoprotein reductase] + H2O + H(+). It participates in secondary metabolite biosynthesis; terpenoid biosynthesis. In terms of biological role, monooxygenase involved in the biosynthesis of limonoids triterpene natural products such as limonin, a compound with insecticidal activity responsible for the bitter taste in citrus. Catalyzes the epoxidation of melianol to produce 7,8-epoxymelianol. The protein is 7,8-epoxymelianol synthase CYP88A51 of Citrus sinensis (Sweet orange).